The chain runs to 375 residues: Nucleolysin TIAR (375 aa).

RRM domains follow at residues 9–85 (RTLY…WATT) and 97–175 (FHVF…WATR). Residue lysine 122 is modified to N6-acetyllysine. At serine 201 the chain carries Phosphoserine. Positions 205-277 (CTVYCGGIAS…HVVKCYWGKE (73 aa)) constitute an RRM 3 domain. Positions 345–375 (FGAQPPQGQAPPPVIPPPNQAGYGMASYQTQ) are disordered. A compositionally biased stretch (pro residues) spans 352-363 (GQAPPPVIPPPN).

In terms of assembly, interacts with FASTK. In terms of processing, phosphorylated by MAPK14 following DNA damage, releasing TIAR from GADD45A mRNA. As to expression, expressed in brain, heart, kidney, lung and skeletal muscle.

Its subcellular location is the nucleus. It localises to the cytoplasm. The protein resides in the cytolytic granule. It is found in the stress granule. Functionally, RNA-binding protein involved in alternative pre-RNA splicing and in cytoplasmic stress granules formation. Shows a preference for uridine-rich RNAs. Activates splicing of alternative exons with weak 5' splice sites followed by a U-rich stretch on its own pre-mRNA and on TIA1 mRNA. Promotes the inclusion of TIA1 exon 5 to give rise to the long isoform (isoform a) of TIA1. Acts downstream of the stress-induced phosphorylation of EIF2S1/EIF2A to promote the recruitment of untranslated mRNAs to cytoplasmic stress granules (SG). Possesses nucleolytic activity against cytotoxic lymphocyte target cells. May be involved in apoptosis. This is Nucleolysin TIAR (TIAL1) from Homo sapiens (Human).